A 108-amino-acid polypeptide reads, in one-letter code: Evasin P1127 (108 aa).

An N-terminal signal peptide occupies residues 1-28; the sequence is MEAKTFAFLEIAMFIALGIQTFVAVTDA. 3 cysteine pairs are disulfide-bonded: cysteine 41-cysteine 63, cysteine 45-cysteine 65, and cysteine 56-cysteine 76. N-linked (GlcNAc...) asparagine glycosylation occurs at asparagine 44. Residue asparagine 89 is glycosylated (N-linked (GlcNAc...) asparagine).

It localises to the secreted. Salivary chemokine-binding protein which binds to host chemokines CXCL1, CXCL2, CXCL3, CXCL5 and CXCL8. The polypeptide is Evasin P1127 (Ixodes ricinus (Common tick)).